The primary structure comprises 113 residues: Ribosome-binding factor A (113 aa).

The protein belongs to the RbfA family. In terms of assembly, monomer. Binds 30S ribosomal subunits, but not 50S ribosomal subunits or 70S ribosomes.

Its subcellular location is the cytoplasm. Functionally, one of several proteins that assist in the late maturation steps of the functional core of the 30S ribosomal subunit. Associates with free 30S ribosomal subunits (but not with 30S subunits that are part of 70S ribosomes or polysomes). Required for efficient processing of 16S rRNA. May interact with the 5'-terminal helix region of 16S rRNA. The protein is Ribosome-binding factor A of Oceanobacillus iheyensis (strain DSM 14371 / CIP 107618 / JCM 11309 / KCTC 3954 / HTE831).